The chain runs to 217 residues: Adapter protein MecA (217 aa).

This sequence belongs to the MecA family. As to quaternary structure, homodimer.

In terms of biological role, enables the recognition and targeting of unfolded and aggregated proteins to the ClpC protease or to other proteins involved in proteolysis. The sequence is that of Adapter protein MecA from Listeria monocytogenes serotype 4b (strain CLIP80459).